Consider the following 356-residue polypeptide: CLIP domain-containing serine protease C9 (356 aa).

One can recognise a Clip domain in the interval 49 to 94 (SCDTPQVIGGKCMNISLCDPAFVHSIAYQEHTPVCQQNAFYRVICC). Disulfide bonds link Cys-50/Cys-93, Cys-60/Cys-83, Cys-66/Cys-94, and Cys-139/Cys-155. Residue Asn-62 is glycosylated (N-linked (GlcNAc...) asparagine). Residues 109–351 (IMHGIEAEPG…YFGWIKETVS (243 aa)) enclose the Peptidase S1 domain. Catalysis depends on charge relay system residues His-154 and Asp-194. The cysteines at positions 258 and 284 are disulfide-linked. Residue Asn-292 is glycosylated (N-linked (GlcNAc...) asparagine). Residues Cys-300 and Cys-328 are joined by a disulfide bond. Ser-304 serves as the catalytic Charge relay system.

Belongs to the peptidase S1 family. CLIP subfamily. As to quaternary structure, in the active form, heterodimer of a p12 subunit and a p30 subunit; disulfide-linked. Post-translationally, secreted as a full-length protein. Following bacterium E.coli infection, proteolytically cleaved into two chains, p12 and p30, which remain covalently linked.

It is found in the secreted. Its function is as follows. Probable serine protease which plays an essential role in the innate immune response against bacteria and protozoa infection by activating the melanization cascade. In the susceptible strain G3, appears to be dispensable for ookinete elimination which occurs by lysis. This Anopheles gambiae (African malaria mosquito) protein is CLIP domain-containing serine protease C9.